A 505-amino-acid polypeptide reads, in one-letter code: MEQTEKSKVYAENGLLEKIKLCLSKKPLPSPTERKKFDHDFAISTSFHGIHNIVQNRSKIRRVLWLVVVLGSVSLVTWQIYIRLLNYFTWPTTTSIEVQYVEKMEFPAVTFCNLNRFQTDAVAKFGVIFFLWHIVSKVLHLQEITANSTGSREATDFAASHQNFSIVEFIRNKGFYLNNSTLLDCEFFGKPCSPKDFAHVFTEYGNCFTFNHGETLQAKRKVSVSGRGLSLLFNVNQEAFTDNPALGFVDAGIIFVIHSPKKVPQFDGLGLLSPVGMHARVTIRQVKTVHQEYPWGECNPNIKLQNFSSYSTSGCLKECKAQHIKKQCGCVPFLLPGYGIECDLQKYFSCVSPVLDHIEFKDLCTVGTHNSSCPVSCEEIEYPATISYSSFPSQKALKYLSKKLNQSRKYIRENLVKIEINYSDLNYKITQQQKAVSVSELLADLGGQLGLFCGASLITIIEIIEYLFTNFYWICIFFLLKISEMTQWTPPPQNHLGNKNRIEEC.

The segment at 1–30 (MEQTEKSKVYAENGLLEKIKLCLSKKPLPS) is binds the plasma membrane and stabilizes the channel in the closed state. Residues 1–61 (MEQTEKSKVY…NIVQNRSKIR (61 aa)) are Cytoplasmic-facing. A helical transmembrane segment spans residues 62 to 82 (RVLWLVVVLGSVSLVTWQIYI). At 83-459 (RLLNYFTWPT…GLFCGASLIT (377 aa)) the chain is on the extracellular side. Disulfide bonds link cysteine 112/cysteine 207, cysteine 185/cysteine 192, cysteine 298/cysteine 377, cysteine 315/cysteine 373, cysteine 328/cysteine 350, and cysteine 330/cysteine 342. N-linked (GlcNAc...) asparagine glycosylation is found at asparagine 147, asparagine 163, asparagine 178, and asparagine 179. The N-linked (GlcNAc...) asparagine glycan is linked to asparagine 306. Residues asparagine 370, asparagine 405, and asparagine 421 are each glycosylated (N-linked (GlcNAc...) asparagine). Positions 454–456 (GAS) match the GAS motif; ion selectivity filter motif. The helical transmembrane segment at 460–480 (IIEIIEYLFTNFYWICIFFLL) threads the bilayer. Residues 481 to 505 (KISEMTQWTPPPQNHLGNKNRIEEC) lie on the Cytoplasmic side of the membrane.

Belongs to the amiloride-sensitive sodium channel (TC 1.A.6) family. ASIC5 subfamily. Forms homotrimeric channels. As to expression, detected in small intestine, duodenum and jejunum. Detected at very low levels in testis and rectum.

It localises to the apical cell membrane. The protein resides in the cell membrane. The enzyme catalyses Na(+)(in) = Na(+)(out). The catalysed reaction is Li(+)(in) = Li(+)(out). It carries out the reaction K(+)(in) = K(+)(out). It catalyses the reaction H(+)(in) = H(+)(out). With respect to regulation, inhibited by the diuretic drug amiloride. Forms bile acid-gated sodium channels and may play a role in bile acid-dependent absorption and secretion by epithelial cells of the bile ducts. Displays high selectivity for sodium ions but can also permit the permeation of other cations. The gating could be indirect and the consequence of alterations of the membrane environment of the channel by bile acids. As a sodium channel of type II unipolar brush cells of the vestibulocerebellum, controlling the electrical activity of these cells, could play a role in motor coordination and balance. The chain is Bile acid-sensitive ion channel from Homo sapiens (Human).